The following is a 37-amino-acid chain: Somatostatin-37 (37 aa).

The propeptide occupies Ala-1 to Leu-2. A disulfide bridge connects residues Cys-26 and Cys-37.

This sequence belongs to the somatostatin family.

The protein localises to the secreted. Functionally, somatostatin inhibits the release of somatotropin. The polypeptide is Somatostatin-37 (sst) (Petromyzon marinus (Sea lamprey)).